Reading from the N-terminus, the 340-residue chain is Spike protein P5 (340 aa).

The tract at residues 2 to 122 (ANQQIGGSTV…NFPIALGVWP (121 aa)) is domain-1. The 19-residue stretch at 123 to 141 (SGIKGDKGDPGAPGPAGGT) folds into the Collagen-like domain. The segment at 142 to 340 (VVVEDSGASF…IINITAAKIN (199 aa)) is domain-2.

As to quaternary structure, homotrimer.

The protein resides in the virion. Functionally, in association with P31 and P2, forms the spike complexes located at the 5-fold vertices of the capsid. Essential for viral infectivity. This is Spike protein P5 (V) from Enterobacteria phage PRD1 (Bacteriophage PRD1).